Here is a 202-residue protein sequence, read N- to C-terminus: ATP-dependent Clp protease proteolytic subunit (202 aa).

The Nucleophile role is filled by Ser-106. His-131 is an active-site residue.

The protein belongs to the peptidase S14 family. Fourteen ClpP subunits assemble into 2 heptameric rings which stack back to back to give a disk-like structure with a central cavity, resembling the structure of eukaryotic proteasomes.

The protein localises to the cytoplasm. The enzyme catalyses Hydrolysis of proteins to small peptides in the presence of ATP and magnesium. alpha-casein is the usual test substrate. In the absence of ATP, only oligopeptides shorter than five residues are hydrolyzed (such as succinyl-Leu-Tyr-|-NHMec, and Leu-Tyr-Leu-|-Tyr-Trp, in which cleavage of the -Tyr-|-Leu- and -Tyr-|-Trp bonds also occurs).. Functionally, cleaves peptides in various proteins in a process that requires ATP hydrolysis. Has a chymotrypsin-like activity. Plays a major role in the degradation of misfolded proteins. The protein is ATP-dependent Clp protease proteolytic subunit of Shewanella oneidensis (strain ATCC 700550 / JCM 31522 / CIP 106686 / LMG 19005 / NCIMB 14063 / MR-1).